Here is a 305-residue protein sequence, read N- to C-terminus: Mitochondrial brown fat uncoupling protein 1 (305 aa).

The Mitochondrial intermembrane portion of the chain corresponds to Met1 to Pro10. Residues Pro11–Phe32 form a helical membrane-spanning segment. 3 Solcar repeats span residues Pro11–Phe102, Ala109–Ala199, and Asp208–Glu293. The Mitochondrial matrix segment spans residues Pro33–Lys73. Position 56 (Lys56) interacts with fatty acid 16:0. The chain crosses the membrane as a helical span at residues Leu74 to Tyr96. Topologically, residues Asp97–Lys114 are mitochondrial intermembrane. Residues Ile115–Pro131 traverse the membrane as a helical segment. The Mitochondrial matrix segment spans residues Thr132–Thr176. A helical membrane pass occupies residues Pro177–Tyr193. Residues Asp194 to Val210 lie on the Mitochondrial intermembrane side of the membrane. Residues Pro211–Pro230 form a helical membrane-spanning segment. The Mitochondrial matrix segment spans residues Val231–Ala264. Cys252 is subject to Cysteine sulfenic acid (-SOH). A helical transmembrane segment spans residues Phe265–Phe287. Residue Lys267 coordinates fatty acid 16:0. At Glu288–Thr305 the chain is on the mitochondrial intermembrane side.

The protein belongs to the mitochondrial carrier (TC 2.A.29) family. In terms of assembly, most probably functions as a monomer. Binds one purine nucleotide per monomer. However, has also been suggested to function as a homodimer or a homotetramer. Tightly associates with cardiolipin in the mitochondrion inner membrane; may stabilize and regulate its activity. In terms of processing, may undergo sulfenylation upon cold exposure. May increase the sensitivity of UCP1 thermogenic function to the activation by noradrenaline probably through structural effects. Post-translationally, may undergo ubiquitin-mediated proteasomal degradation.

It is found in the mitochondrion inner membrane. It carries out the reaction H(+)(in) = H(+)(out). Its activity is regulated as follows. Has no constitutive proton transporter activity and has to be activated by long-chain fatty acids/LCFAs. Inhibited by purine nucleotides. Both purine nucleotides and LCFAs bind the cytosolic side of the transporter and directly compete to activate or inhibit it. Activated by noradrenaline and reactive oxygen species. Despite lacking canonical translational encoding for selenocysteine, a small pool of the protein has been observed to selectively incorporate selenocysteine at 'Cys-252'. Selenocysteine-modified protein is highly sensitive to redox modification and may constitute a pool of protein highly sensitive to activation by elevated levels of reactive oxygen species (ROS). In terms of biological role, mitochondrial protein responsible for thermogenic respiration, a specialized capacity of brown adipose tissue and beige fat that participates in non-shivering adaptive thermogenesis to temperature and diet variations and more generally to the regulation of energy balance. Functions as a long-chain fatty acid/LCFA and proton symporter, simultaneously transporting one LCFA and one proton through the inner mitochondrial membrane. However, LCFAs remaining associated with the transporter via their hydrophobic tails, it results in an apparent transport of protons activated by LCFAs. Thereby, dissipates the mitochondrial proton gradient and converts the energy of substrate oxydation into heat instead of ATP. Regulates the production of reactive oxygen species/ROS by mitochondria. This Ovis aries (Sheep) protein is Mitochondrial brown fat uncoupling protein 1.